Consider the following 448-residue polypeptide: Probable glycine dehydrogenase (decarboxylating) subunit 1 (448 aa).

This sequence belongs to the GcvP family. N-terminal subunit subfamily. The glycine cleavage system is composed of four proteins: P, T, L and H. In this organism, the P 'protein' is a heterodimer of two subunits.

The catalysed reaction is N(6)-[(R)-lipoyl]-L-lysyl-[glycine-cleavage complex H protein] + glycine + H(+) = N(6)-[(R)-S(8)-aminomethyldihydrolipoyl]-L-lysyl-[glycine-cleavage complex H protein] + CO2. Its function is as follows. The glycine cleavage system catalyzes the degradation of glycine. The P protein binds the alpha-amino group of glycine through its pyridoxal phosphate cofactor; CO(2) is released and the remaining methylamine moiety is then transferred to the lipoamide cofactor of the H protein. This chain is Probable glycine dehydrogenase (decarboxylating) subunit 1, found in Thermomicrobium roseum (strain ATCC 27502 / DSM 5159 / P-2).